A 277-amino-acid chain; its full sequence is MVSVEDLHGLSAGQASVPDCKLFPQSPSAATRIAVLLAAALAGAAGGVALASAAGPQPLWAVLGAAAVAGGLLSTWSPCGYSSISLLRPDGRGLRAVAGWLPTFAMHGAGYGLGALMLGGLLGGIGLIAGFSGFGSTALLVLGLVGLAYGAHQLDFLRVPYPQRRAQVPHDARQRFPKWVIGGLYGLSLGLDYLTYVQTPLLYMMTLAAVFTGNIAHAIAIVALFNLGRFLPVAVNALPIPDYRVQAWLARHQENAALADGAILTALGAGFTVLALI.

Transmembrane regions (helical) follow at residues 33-53, 59-79, 111-131, 132-152, 179-199, 205-225, and 257-277; these read IAVL…LASA, LWAV…WSPC, YGLG…IAGF, SGFG…YGAH, WVIG…YVQT, MTLA…VALF, and ALAD…LALI.

It localises to the cell membrane. It participates in one-carbon metabolism; methylamine degradation. In Paracoccus denitrificans, this protein is Methylamine utilization protein MauF (mauF).